We begin with the raw amino-acid sequence, 362 residues long: MRTAVIIGTGMIGTSIGLALRKQGVDSYLMDTSPVALRIAEAVGAGTAEEPPETVDLAVVAVPPVHVAPVIASHQSRGTARFYVDVAGVKVSTRRELDALGCDLATVVGGHPLVGRPGSGPLAARGDLFDGRPWALVPAVGTDAAALNRALELVAACGAIPVVLDAEAHDRAIALGTLVPQIALTLVAARLTEADSGALRLLGSVWSEIPQLVGVDSATSWTQVLAANAAPVVGELEKLSRDLASLLETLRGVADGDGSLAEPDGRLLEFIQRGIDGSNRVPGRYGIPTETALADVDVSVDDRPAELARLFDDVAGAGVVMRGIDISQRPDSPDRTVTISVTPRDAENLLHELRRRKWPANS.

The Prephenate/arogenate dehydrogenase domain occupies Arg-2–Gly-283.

This sequence belongs to the prephenate/arogenate dehydrogenase family.

It carries out the reaction prephenate + NAD(+) = 3-(4-hydroxyphenyl)pyruvate + CO2 + NADH. The protein operates within antibiotic biosynthesis; novobiocin biosynthesis. In terms of biological role, probable prephenate dehydrogenase that produces 4-hydroxyphenylpyruvate (4HPP) in the novobiocin biosynthesis pathway. Novobiocin is an aminocoumarin family antibiotic that targets bacterial DNA gyrases. This Streptomyces niveus (Streptomyces spheroides) protein is Probable prephenate dehydrogenase NovF (novF).